The primary structure comprises 425 residues: MTIVEDAKKGLITEEMKVVAKSEGVTEDFIRRGIAGGHIVIPMTPYRKVKLCGIGSGLRTKVNASIGTSSDIVNVEEELEKARQAELAGADSLMELSTGGDFLDIRRRVCEQSNLSVGSVPLYQAFIEAARNKGGVVFMDEDDLFKITEQQAKLGTNFMAIHTGINYETVKRLKNQGRHGGLVSRGGAFMTAWMLHNEMENPLYRRFDYLVEILKEHEVTLSFGNGMRAGACHDATDRAAIQELLINAELADQAHNAGVQCILEGPGHIPLDEIKTNVQLEKRVTNNKPFYMLGPLVTDIAPGYDDRVAAIGASVSSAAGADFICYVTPAEHLALPTPEEVYEGVMSSRIAAHVGDMVKLPKTREADLEMGHARRDLDWERQYAVSINAEKARCIRNSRMPADSDACTMCGDFCAIKIVQKTFNF.

Substrate contacts are provided by residues Met94, Tyr123, His162, 184–186 (SRG), 225–228 (NGMR), and Glu264. His268 lines the Zn(2+) pocket. A substrate-binding site is contributed by Tyr291. Position 332 (His332) interacts with Zn(2+). Cys407, Cys410, and Cys414 together coordinate [4Fe-4S] cluster.

Belongs to the ThiC family. Requires [4Fe-4S] cluster as cofactor.

It carries out the reaction 5-amino-1-(5-phospho-beta-D-ribosyl)imidazole + S-adenosyl-L-methionine = 4-amino-2-methyl-5-(phosphooxymethyl)pyrimidine + CO + 5'-deoxyadenosine + formate + L-methionine + 3 H(+). It participates in cofactor biosynthesis; thiamine diphosphate biosynthesis. In terms of biological role, catalyzes the synthesis of the hydroxymethylpyrimidine phosphate (HMP-P) moiety of thiamine from aminoimidazole ribotide (AIR) in a radical S-adenosyl-L-methionine (SAM)-dependent reaction. This Methanocorpusculum labreanum (strain ATCC 43576 / DSM 4855 / Z) protein is Phosphomethylpyrimidine synthase.